We begin with the raw amino-acid sequence, 27 residues long: MIINHNMSAINANRVLGBTNADITKDL.

The protein belongs to the bacterial flagellin family. As to quaternary structure, the flagellum consists of an outer layer composed of repeating units of FlaA around a core that contains one or all of five antigenically related polypeptides.

It localises to the periplasmic flagellum. Its subcellular location is the periplasm. Functionally, component of the core of the flagella. This Spirochaeta aurantia protein is Flagellar filament 31.5 kDa core protein.